The following is a 175-amino-acid chain: Large ribosomal subunit protein bL9 (175 aa).

The protein belongs to the bacterial ribosomal protein bL9 family.

Binds to the 23S rRNA. This chain is Large ribosomal subunit protein bL9, found in Orientia tsutsugamushi (strain Boryong) (Rickettsia tsutsugamushi).